An 810-amino-acid polypeptide reads, in one-letter code: Phenylalanine--tRNA ligase beta subunit (810 aa).

One can recognise a tRNA-binding domain in the interval 39-154; it reads APPTEKIVVG…EGTPVGQDIR (116 aa). Positions 405–480 constitute a B5 domain; it reads PQRAPVSMRA…RIYGFEKIPA (76 aa). Mg(2+) is bound by residues D458, D464, E467, and E468. One can recognise an FDX-ACB domain in the interval 707–809; it reads SKFPPVRRDI…MARVYGARLR (103 aa).

It belongs to the phenylalanyl-tRNA synthetase beta subunit family. Type 1 subfamily. In terms of assembly, tetramer of two alpha and two beta subunits. It depends on Mg(2+) as a cofactor.

The protein resides in the cytoplasm. It carries out the reaction tRNA(Phe) + L-phenylalanine + ATP = L-phenylalanyl-tRNA(Phe) + AMP + diphosphate + H(+). This chain is Phenylalanine--tRNA ligase beta subunit, found in Burkholderia mallei (strain ATCC 23344).